A 184-amino-acid chain; its full sequence is Ras-related protein Rap1 (184 aa).

Residue 10-17 (GSGGVGKS) participates in GTP binding. The short motif at 32–40 (YDPTIEDSY) is the Effector region element. Residues 57 to 61 (DTAGT) and 116 to 119 (NKCD) each bind GTP. Position 181 is a cysteine methyl ester (Cys-181). Cys-181 carries S-geranylgeranyl cysteine lipidation. Positions 182–184 (VLL) are cleaved as a propeptide — removed in mature form.

Belongs to the small GTPase superfamily. Ras family.

The protein resides in the cell membrane. It catalyses the reaction GTP + H2O = GDP + phosphate + H(+). Its activity is regulated as follows. Alternates between an inactive form bound to GDP and an active form bound to GTP. Activated by a guanine nucleotide-exchange factor (GEF) and inactivated by a GTPase-activating protein (GAP). Ras proteins bind GDP/GTP and possess intrinsic GTPase activity. Plays a role in photoreceptor cell determination. This Drosophila melanogaster (Fruit fly) protein is Ras-related protein Rap1.